Reading from the N-terminus, the 309-residue chain is Assembly-complementing factor 4 (309 aa).

Disordered regions lie at residues 1–80 (MSED…ASPI), 164–240 (KSIN…ENTP), and 286–309 (VRSE…LFKR). Basic and acidic residues-rich tracts occupy residues 13–24 (ELHKLSIVDKHS) and 34–44 (KQHEVQPESKS). Ser44, Ser71, Ser74, Ser78, and Ser165 each carry phosphoserine. Positions 61–80 (SSPQRSTTNQSPVSDHASPI) are enriched in polar residues. 3 stretches are compositionally biased toward low complexity: residues 174-188 (NNNV…LPNR), 205-214 (PSRSSESTPT), and 222-239 (PRNT…GENT). Positions 287–298 (RSEDEDDEEFEP) are enriched in acidic residues. At Ser288 the chain carries Phosphoserine.

Functionally, may be involved in actin cytoskeleton organization and biogenesis. The sequence is that of Assembly-complementing factor 4 (ACF4) from Saccharomyces cerevisiae (strain ATCC 204508 / S288c) (Baker's yeast).